The sequence spans 344 residues: Protein YRO2 (344 aa).

Residues 1 to 34 (MSDYVELLKRGGNEAIKINPPTGADFHITSRGSD) are Extracellular-facing. A helical transmembrane segment spans residues 35–55 (WLFTVFCVNLLFGVILVPLMF). At 56–62 (RKPVKDR) the chain is on the cytoplasmic side. A helical transmembrane segment spans residues 63–83 (FVYYTAIAPNLFMSIAYFTMA). Residues 84–119 (SNLGWIPVRAKYNHVQTSTQKEHPGYRQIFYARYVG) are Extracellular-facing. A helical membrane pass occupies residues 120–140 (WFLAFPWPIIQMSLLGGTPLW). Residue Q141 is a topological domain, cytoplasmic. A helical membrane pass occupies residues 142 to 162 (IAFNVGMTEIFTVCWLIAACV). The Extracellular portion of the chain corresponds to 163–172 (HSTYKWGYYT). Residues 173-193 (IGIGAAIVVCISLMTTTFNLV) traverse the membrane as a helical segment. Over 194-202 (KARGKDVSN) the chain is Cytoplasmic. The helical transmembrane segment at 203–223 (VFITFMSVIMFLWLIAYPTCF) threads the bilayer. Topologically, residues 224–238 (GITDGGNVLQPDSAT) are extracellular. Residues 239–259 (IFYGIIDLLILSILPVLFMPL) form a helical membrane-spanning segment. The Cytoplasmic segment spans residues 260-344 (ANYLGIERLG…EEEDVATDSE (85 aa)). The tract at residues 282-344 (PVAEKKMPSP…EEEDVATDSE (63 aa)) is disordered. K286 participates in a covalent cross-link: Glycyl lysine isopeptide (Lys-Gly) (interchain with G-Cter in ubiquitin). Position 293 is a phosphoserine (S293). Basic and acidic residues predominate over residues 297-306 (SDSDSSIKEK). A compositionally biased stretch (basic residues) spans 307–330 (LKLKKKHKKDKKKAKKAKKAKKAK). Acidic residues predominate over residues 334–344 (EEEEDVATDSE). T341 is modified (phosphothreonine). Position 343 is a phosphoserine (S343).

Belongs to the archaeal/bacterial/fungal opsin family.

It is found in the membrane. This chain is Protein YRO2 (YRO2), found in Saccharomyces cerevisiae (strain ATCC 204508 / S288c) (Baker's yeast).